The primary structure comprises 335 residues: Probable cytosolic iron-sulfur protein assembly protein Ciao1 (335 aa).

WD repeat units lie at residues 12–51, 57–96, 101–140, 146–185, 192–231, 250–289, and 301–335; these read GHKG…WSTK, GHKR…FECN, GHEN…EFEC, SHTQ…NDWD, SHTS…NSAG, QHSR…KPDE, and AHDQ…KVTE.

It belongs to the WD repeat CIA1 family.

Functionally, essential component of the cytosolic iron-sulfur (Fe/S) protein assembly machinery. Required for the maturation of extramitochondrial Fe/S proteins. The protein is Probable cytosolic iron-sulfur protein assembly protein Ciao1 of Drosophila erecta (Fruit fly).